We begin with the raw amino-acid sequence, 206 residues long: Imidazoleglycerol-phosphate dehydratase (206 aa).

The tract at residues Met-1–Lys-24 is disordered.

The protein belongs to the imidazoleglycerol-phosphate dehydratase family.

The protein resides in the cytoplasm. It carries out the reaction D-erythro-1-(imidazol-4-yl)glycerol 3-phosphate = 3-(imidazol-4-yl)-2-oxopropyl phosphate + H2O. It functions in the pathway amino-acid biosynthesis; L-histidine biosynthesis; L-histidine from 5-phospho-alpha-D-ribose 1-diphosphate: step 6/9. The chain is Imidazoleglycerol-phosphate dehydratase from Acidothermus cellulolyticus (strain ATCC 43068 / DSM 8971 / 11B).